Reading from the N-terminus, the 179-residue chain is Large ribosomal subunit protein uL5 (179 aa).

It belongs to the universal ribosomal protein uL5 family. In terms of assembly, part of the 50S ribosomal subunit; part of the 5S rRNA/L5/L18/L25 subcomplex. Contacts the 5S rRNA and the P site tRNA. Forms a bridge to the 30S subunit in the 70S ribosome.

Its function is as follows. This is one of the proteins that bind and probably mediate the attachment of the 5S RNA into the large ribosomal subunit, where it forms part of the central protuberance. In the 70S ribosome it contacts protein S13 of the 30S subunit (bridge B1b), connecting the 2 subunits; this bridge is implicated in subunit movement. Contacts the P site tRNA; the 5S rRNA and some of its associated proteins might help stabilize positioning of ribosome-bound tRNAs. The sequence is that of Large ribosomal subunit protein uL5 from Photorhabdus laumondii subsp. laumondii (strain DSM 15139 / CIP 105565 / TT01) (Photorhabdus luminescens subsp. laumondii).